A 417-amino-acid chain; its full sequence is NADH-quinone oxidoreductase subunit D (417 aa).

Belongs to the complex I 49 kDa subunit family. NDH-1 is composed of 14 different subunits. Subunits NuoB, C, D, E, F, and G constitute the peripheral sector of the complex.

It localises to the cell inner membrane. It carries out the reaction a quinone + NADH + 5 H(+)(in) = a quinol + NAD(+) + 4 H(+)(out). In terms of biological role, NDH-1 shuttles electrons from NADH, via FMN and iron-sulfur (Fe-S) centers, to quinones in the respiratory chain. The immediate electron acceptor for the enzyme in this species is believed to be ubiquinone. Couples the redox reaction to proton translocation (for every two electrons transferred, four hydrogen ions are translocated across the cytoplasmic membrane), and thus conserves the redox energy in a proton gradient. The protein is NADH-quinone oxidoreductase subunit D of Coxiella burnetii (strain RSA 331 / Henzerling II).